The following is a 313-amino-acid chain: 4-hydroxy-3-methylbut-2-enyl diphosphate reductase (313 aa).

Residue Cys-14 coordinates [4Fe-4S] cluster. 2 residues coordinate (2E)-4-hydroxy-3-methylbut-2-enyl diphosphate: His-43 and His-76. 2 residues coordinate dimethylallyl diphosphate: His-43 and His-76. 2 residues coordinate isopentenyl diphosphate: His-43 and His-76. Cys-98 lines the [4Fe-4S] cluster pocket. Residue His-126 participates in (2E)-4-hydroxy-3-methylbut-2-enyl diphosphate binding. His-126 contacts dimethylallyl diphosphate. His-126 is a binding site for isopentenyl diphosphate. The active-site Proton donor is the Glu-128. Thr-166 contributes to the (2E)-4-hydroxy-3-methylbut-2-enyl diphosphate binding site. Cys-196 provides a ligand contact to [4Fe-4S] cluster. 4 residues coordinate (2E)-4-hydroxy-3-methylbut-2-enyl diphosphate: Ser-224, Ser-225, Asn-226, and Ser-269. Dimethylallyl diphosphate is bound by residues Ser-224, Ser-225, Asn-226, and Ser-269. Residues Ser-224, Ser-225, Asn-226, and Ser-269 each coordinate isopentenyl diphosphate.

The protein belongs to the IspH family. It depends on [4Fe-4S] cluster as a cofactor.

The catalysed reaction is isopentenyl diphosphate + 2 oxidized [2Fe-2S]-[ferredoxin] + H2O = (2E)-4-hydroxy-3-methylbut-2-enyl diphosphate + 2 reduced [2Fe-2S]-[ferredoxin] + 2 H(+). The enzyme catalyses dimethylallyl diphosphate + 2 oxidized [2Fe-2S]-[ferredoxin] + H2O = (2E)-4-hydroxy-3-methylbut-2-enyl diphosphate + 2 reduced [2Fe-2S]-[ferredoxin] + 2 H(+). Its pathway is isoprenoid biosynthesis; dimethylallyl diphosphate biosynthesis; dimethylallyl diphosphate from (2E)-4-hydroxy-3-methylbutenyl diphosphate: step 1/1. It functions in the pathway isoprenoid biosynthesis; isopentenyl diphosphate biosynthesis via DXP pathway; isopentenyl diphosphate from 1-deoxy-D-xylulose 5-phosphate: step 6/6. Its function is as follows. Catalyzes the conversion of 1-hydroxy-2-methyl-2-(E)-butenyl 4-diphosphate (HMBPP) into a mixture of isopentenyl diphosphate (IPP) and dimethylallyl diphosphate (DMAPP). Acts in the terminal step of the DOXP/MEP pathway for isoprenoid precursor biosynthesis. This is 4-hydroxy-3-methylbut-2-enyl diphosphate reductase from Tropheryma whipplei (strain TW08/27) (Whipple's bacillus).